The primary structure comprises 228 residues: Mitochondrial assembly of ribosomal large subunit protein 1 (228 aa).

A disordered region spans residues 53–77; sequence SLTRGLHHGPQPEERTAGDARLQPG.

It belongs to the Iojap/RsfS family. As to quaternary structure, associates with the mitochondrial ribosome large subunit (39S) via interaction with MRPL12 and/or MRPL14. The interaction generates steric hindrance that is expected to prevent premature association of the 28S and 39S ribosomal subunits. Identified in a complex composed of MALSU1, MIEF1 upstream open reading frame protein and NDUFAB1; within the trimeric complex, MIEF1 upstream open reading frame protein functions as a bridging scaffold that interacts with MALSU1 on one side, and with NDUFAB1 on the other side. Interacts with MRPL12 and MRPL14.

The protein resides in the mitochondrion matrix. Required for normal mitochondrial ribosome function and mitochondrial translation. May play a role in ribosome biogenesis by preventing premature association of the 28S and 39S ribosomal subunits. Interacts with mitochondrial ribosomal protein uL14m (MRPL14), probably blocking formation of intersubunit bridge B8, preventing association of the 28S and 39S ribosomal subunits. Addition to isolated mitochondrial ribosomal subunits partially inhibits translation, probably by interfering with the association of the 28S and 39S ribosomal subunits and the formation of functional ribosomes. May also participate in the assembly and/or regulation of the stability of the large subunit of the mitochondrial ribosome. May function as a ribosomal silencing factor. The protein is Mitochondrial assembly of ribosomal large subunit protein 1 (Malsu1) of Mus musculus (Mouse).